A 446-amino-acid chain; its full sequence is MADRTEQILTPSQLNTLARDLLEGSFPLVWVEAELGNVTRPASGHLYFTLKDARAQIRCAMFKPKSTWLKFQPREGLRVLARGRLTLYEARGDYQLVLDHMEEAGEGALRRAFEELRARLAAEGVFDAERKQPLPAHVRRLAVITSPSGAAVRDVLSVLARRFPLLEVDILPSLVQGDSAAAQITSLLQRADASGRYDVILITRGGGSLEDLWAFNDERLARAIAAAHTPVVSAVGHETDVSLSDFAADVRAPTPSVAAELLVPDQRELVARVRRAQARLSQLQQHTLGQAMQHADRLALRLRARSPQARLQLLQRRQEDAARHLRARMQHILERLQARVQRAQAGVQSHSPQRHLAPLQQRLRAAHPQAAMQRRLQQDHLHLRGLVRSLEAVSPLATVARGYAIVTRQADGSVVRSAAELTQGDRLRAQLADGSVTVVVDTSETG.

This sequence belongs to the XseA family. Heterooligomer composed of large and small subunits.

Its subcellular location is the cytoplasm. The catalysed reaction is Exonucleolytic cleavage in either 5'- to 3'- or 3'- to 5'-direction to yield nucleoside 5'-phosphates.. Its function is as follows. Bidirectionally degrades single-stranded DNA into large acid-insoluble oligonucleotides, which are then degraded further into small acid-soluble oligonucleotides. In Xanthomonas campestris pv. campestris (strain 8004), this protein is Exodeoxyribonuclease 7 large subunit.